A 263-amino-acid polypeptide reads, in one-letter code: Polyglutamine-binding protein 1 (263 aa).

The WW domain occupies 46 to 80 (EGLPPSWYKVFDPSCGLPYYWNVETDLVSWLSPHD). Positions 94–263 (NNNADAEDKS…AEASRTKQQD (170 aa)) are disordered. A compositionally biased stretch (basic and acidic residues) spans 99–173 (AEDKSDRNLE…DKADREEGKD (75 aa)). One copy of the 1-1; approximate repeat lies at 104–110 (DRNLEKV). The segment at 104-138 (DRNLEKVDRNHEKSDRSHEKPDRSHEKADRNHEKN) is 5 X 7 AA approximate tandem repeats of D-R-[NS]-H-E-K-S. A 1-2 repeat occupies 111–117 (DRNHEKS). Residues 118-124 (DRSHEKP) form a 1-3; approximate repeat. One copy of the 1-4; approximate repeat lies at 125 to 131 (DRSHEKA). Residues 132 to 138 (DRNHEKN) form a 1-5; approximate repeat. 9 repeat units span residues 139 to 140 (DR), 141 to 142 (ER), 143 to 144 (ER), 150 to 151 (DR), 152 to 153 (ER), 154 to 155 (DR), 156 to 157 (DR), 158 to 159 (ER), and 160 to 161 (ER). Positions 139–144 (DRERER) are 3 X 2 AA tandem repeats of [DE]-R. The 6 X 2 AA tandem repeats of [DE]-R stretch occupies residues 150-161 (DRERDRDRERER). An important for interaction with TXNL4A region spans residues 243–253 (YPSPGAVLRAN). S245 is subject to Phosphoserine.

Interacts with POU3F2/Brn-2, ATXN1, TXNL4A, HTT and AR. Interaction with ATXN1 correlates positively with the length of the polyglutamine tract. Interacts with RNA polymerase II large subunit in a phosphorylation-dependent manner. Forms a ternary complex with ATXN1 mutant and phosphorylated RNA polymerase II. Interacts (via C-terminus) with TXNL4A and CD2BP2. Interacts (via WW domain) with ATN1 and SF3B1, and may interact with additional splice factors. Interacts (via WW domain) with WBP11; Leading to reduce interaction between PQBP1 and TXNL4A. Interacts with CAPRIN1. Interacts with DDX1. Interacts with SFPQ. Interacts with KHSRP. As to expression, detected in brain cortex and hippocampus neurons (at protein level). Expressed in brain with high level in cerebellar cortex, hippocampus and olfactory bulb.

The protein localises to the nucleus. It is found in the nucleus speckle. Its subcellular location is the cytoplasmic granule. Its function is as follows. Intrinsically disordered protein that acts as a scaffold, and which is involved in different processes, such as pre-mRNA splicing, transcription regulation, innate immunity and neuron development. Interacts with splicing-related factors via the intrinsically disordered region and regulates alternative splicing of target pre-mRNA species. May suppress the ability of POU3F2 to transactivate the DRD1 gene in a POU3F2 dependent manner. Can activate transcription directly or via association with the transcription machinery. May be involved in ATXN1 mutant-induced cell death. The interaction with ATXN1 mutant reduces levels of phosphorylated RNA polymerase II large subunit. Involved in the assembly of cytoplasmic stress granule, possibly by participating in the transport of neuronal RNA granules. Also acts as an innate immune sensor of infection by retroviruses, by detecting the presence of reverse-transcribed DNA in the cytosol. Directly binds retroviral reverse-transcribed DNA in the cytosol and interacts with CGAS, leading to activate the cGAS-STING signaling pathway, triggering type-I interferon production. The protein is Polyglutamine-binding protein 1 (Pqbp1) of Mus musculus (Mouse).